Consider the following 475-residue polypeptide: Aminodeoxychorismate synthase component 1 (475 aa).

The protein belongs to the anthranilate synthase component I family. Monomer. Heterodimer consisting of two non-identical subunits: a glutamine amidotransferase subunit (PabA) and a aminodeoxychorismate synthase subunit (PabB). Mg(2+) serves as cofactor.

The catalysed reaction is chorismate + L-glutamine = 4-amino-4-deoxychorismate + L-glutamate. It participates in cofactor biosynthesis; tetrahydrofolate biosynthesis; 4-aminobenzoate from chorismate: step 1/2. In terms of biological role, part of a heterodimeric complex that catalyzes the two-step biosynthesis of 4-amino-4-deoxychorismate (ADC), a precursor of p-aminobenzoate (PABA) and tetrahydrofolate. In the first step, a glutamine amidotransferase (PabA) generates ammonia as a substrate that, along with chorismate, is used in the second step, catalyzed by aminodeoxychorismate synthase (PabB) to produce ADC. The polypeptide is Aminodeoxychorismate synthase component 1 (pabB) (Streptomyces lividans).